We begin with the raw amino-acid sequence, 941 residues long: PHD finger protein 14 (941 aa).

The tract at residues 22–295 (DYDSSDDSDF…LSQSKSNEDS (274 aa)) is disordered. Residues serine 26 and serine 29 each carry the phosphoserine modification. The span at 36–47 (ASDSEGSGNGSE) shows a compositional bias: low complexity. Residues 60 to 72 (DSEENILEEELNE) are compositionally biased toward acidic residues. Basic and acidic residues-rich tracts occupy residues 74–85 (IQVKEEQLKNST), 94–109 (QLIKMEKKEEEENGER), and 116–132 (KEKEKEKEREKDKEKAT). Serine 84 carries the post-translational modification Phosphoserine. A compositionally biased stretch (low complexity) spans 133–166 (VSDSAAASAAGTTPATSPPAVTSPSVPTTTTTTT). Position 189 is a phosphoserine (serine 189). Acidic residues-rich tracts occupy residues 194–205 (NAMDDYDSEDDN) and 226–249 (DGDNEDDDDEGSGSEEDENDEGND). Tyrosine 199 is modified (phosphotyrosine). Serine 201 is subject to Phosphoserine. Threonine 280 is subject to Phosphothreonine. Residues 281–290 (NDSLTLSQSK) show a composition bias toward polar residues. 5 positions are modified to phosphoserine: serine 283, serine 287, serine 291, serine 295, and serine 301. Residues 312–373 (ILICCVCLGD…PWFCDACKCG (62 aa)) form a PHD-type 1 zinc finger. Zn(2+)-binding residues include cysteine 315, cysteine 318, cysteine 332, cysteine 335, histidine 340, and cysteine 343. Residue serine 352 is modified to Phosphoserine. The Zn(2+) site is built by cysteine 367, cysteine 370, cysteine 378, cysteine 381, histidine 398, cysteine 401, cysteine 434, cysteine 437, cysteine 451, cysteine 456, histidine 461, cysteine 464, cysteine 488, and histidine 491. A C2HC pre-PHD-type zinc finger spans residues 375-408 (SPSCELCPNQDGIFKETDAGRWVHIVCALYVPGV). The PHD-type 2 zinc finger occupies 432-492 (KECSFCEDPR…PFFAYCKQHA (61 aa)). The residue at position 523 (serine 523) is a Phosphoserine. Residues 623–671 (MIQIQENMAEQKNIKDKLENEQEKLHVEYNKLCESLEELQNLNGKLRSE) adopt a coiled-coil conformation. The segment at 718-772 (LYSCGICKKNHDQHLLLLCDTCKLHYHLGCLDPPLTRMPRKTKNSYWQCSECDQA) adopts a PHD-type 3 zinc-finger fold. Zn(2+) contacts are provided by cysteine 721, cysteine 724, cysteine 736, cysteine 739, histidine 744, cysteine 747, cysteine 766, and cysteine 769. Residues serine 774, serine 775, and serine 828 each carry the phosphoserine modification. The segment at 804 to 855 (VPQDVPPEPKKIPIRNTRTRGRKRSFVPEEEKHEERVPRERRQRQSVLQKKP) is disordered. The segment covering 829-843 (FVPEEEKHEERVPRE) has biased composition (basic and acidic residues). The PHD-type 4 zinc-finger motif lies at 861–914 (RTECSTCKGTGDNENLVRCDECRLCYHFGCLDPPLKKSPKQTGYGWICQECDSS). Zn(2+) is bound by residues cysteine 864, cysteine 867, cysteine 879, cysteine 882, histidine 887, cysteine 890, cysteine 908, and cysteine 911. A disordered region spans residues 912-941 (DSSSSKEDENEAEKKNASQELSMEQKTPKK). Residues 915-928 (SSKEDENEAEKKNA) are compositionally biased toward basic and acidic residues. Positions 930 to 941 (QELSMEQKTPKK) are enriched in polar residues.

In terms of tissue distribution, high levels detected in testis, lung and spleen and low levels in muscle, heart, intestine and kidney (at protein level). Widely expressed in adult with increased levels in intestine, colon and lung.

It is found in the nucleus. The protein localises to the chromosome. It localises to the cytoplasm. Histone-binding protein. Binds preferentially to unmodified histone H3 but can also bind to a lesser extent to histone H3 trimethylated at 'Lys-9' (H3K9me3) as well as to histone H3 monomethylated at 'Lys-27' (H3K27ac) and trimethylated at 'Lys-27' (H3K27me3). Represses PDGFRA expression, thus playing a role in regulation of mesenchymal cell proliferation. Suppresses the expression of CDKN1A/p21 by reducing the level of trimethylation of histone H3 'Lys-4', leading to enhanced proliferation of germinal center B cells. The polypeptide is PHD finger protein 14 (Phf14) (Mus musculus (Mouse)).